A 245-amino-acid polypeptide reads, in one-letter code: 1-(5-phosphoribosyl)-5-[(5-phosphoribosylamino)methylideneamino] imidazole-4-carboxamide isomerase (245 aa).

Aspartate 7 serves as the catalytic Proton acceptor. The active-site Proton donor is the aspartate 129.

It belongs to the HisA/HisF family.

The protein resides in the cytoplasm. It carries out the reaction 1-(5-phospho-beta-D-ribosyl)-5-[(5-phospho-beta-D-ribosylamino)methylideneamino]imidazole-4-carboxamide = 5-[(5-phospho-1-deoxy-D-ribulos-1-ylimino)methylamino]-1-(5-phospho-beta-D-ribosyl)imidazole-4-carboxamide. The protein operates within amino-acid biosynthesis; L-histidine biosynthesis; L-histidine from 5-phospho-alpha-D-ribose 1-diphosphate: step 4/9. The chain is 1-(5-phosphoribosyl)-5-[(5-phosphoribosylamino)methylideneamino] imidazole-4-carboxamide isomerase from Vibrio campbellii (strain ATCC BAA-1116).